The chain runs to 387 residues: Alkanesulfonate monooxygenase (387 aa).

This sequence belongs to the SsuD family.

It catalyses the reaction an alkanesulfonate + FMNH2 + O2 = an aldehyde + FMN + sulfite + H2O + 2 H(+). Its function is as follows. Catalyzes the desulfonation of aliphatic sulfonates. This chain is Alkanesulfonate monooxygenase, found in Ralstonia nicotianae (strain ATCC BAA-1114 / GMI1000) (Ralstonia solanacearum).